Consider the following 597-residue polypeptide: NADPH-dependent diflavin oxidoreductase 1 (597 aa).

Residues 6–150 (LLVLFGSQTG…AVDPWLRDLW (145 aa)) form the Flavodoxin-like domain. FMN contacts are provided by residues 12 to 17 (SQTGTA), 59 to 62 (ATTG), 97 to 106 (LGDSSYAKFN), and aspartate 132. Residues 188–207 (GSEGQRVAHPGSQEPPSESK) form a disordered region. The 242-residue stretch at 206–447 (SKPFLAPMIS…VRPGSLAFPE (242 aa)) folds into the FAD-binding FR-type domain. Residues arginine 350, 382 to 385 (RAFS), and 416 to 419 (GLCS) contribute to the FAD site. NADP(+)-binding positions include threonine 460, 515–516 (SR), 521–525 (KVYVQ), and aspartate 558. FAD is bound at residue tryptophan 596.

The protein belongs to the NADPH-dependent diflavin oxidoreductase NDOR1 family. It in the N-terminal section; belongs to the flavodoxin family. This sequence in the C-terminal section; belongs to the flavoprotein pyridine nucleotide cytochrome reductase family. In terms of assembly, interacts with CIAPIN1; as part of the cytosolic iron-sulfur (Fe-S) protein assembly (CIA) machinery. Interacts with DCPS. FAD serves as cofactor. Requires FMN as cofactor. Low expression in brain, heart, kidney, pancreas, prostate and skeletal muscle. Highest levels in the placenta. Expressed in cancer cell lines including promyelocytic leukemia, HeLaS3, chronic myelagenous leukemia, lymphoblastic leukemia, Burkitt's lymphoma, colorectal adenocarcinoma, lung carcinoma, and melanoma G-361.

It localises to the cytoplasm. Its subcellular location is the perinuclear region. It carries out the reaction 2 oxidized [2Fe-2S]-[protein] + NADPH = 2 reduced [2Fe-2S]-[protein] + NADP(+) + H(+). NADPH-dependent reductase which is a central component of the cytosolic iron-sulfur (Fe-S) protein assembly (CIA) machinery. Transfers electrons from NADPH via its FAD and FMN prosthetic groups to the [2Fe-2S] cluster of CIAPIN1, another key component of the CIA machinery. In turn, this reduced cluster provides electrons for assembly of cytosolic iron-sulfur cluster proteins. It can also reduce the [2Fe-2S] cluster of CISD1 and activate this protein implicated in Fe/S cluster repair. In vitro can fully activate methionine synthase/MTR in the presence of soluble cytochrome b5/CYB5A. This is NADPH-dependent diflavin oxidoreductase 1 from Homo sapiens (Human).